The sequence spans 208 residues: 3-demethoxyubiquinol 3-hydroxylase (208 aa).

Residues Glu-57, Glu-87, His-90, Glu-139, Glu-171, and His-174 each contribute to the Fe cation site.

It belongs to the COQ7 family. The cofactor is Fe cation.

The protein localises to the cell membrane. It carries out the reaction a 5-methoxy-2-methyl-3-(all-trans-polyprenyl)benzene-1,4-diol + AH2 + O2 = a 3-demethylubiquinol + A + H2O. Its pathway is cofactor biosynthesis; ubiquinone biosynthesis. Its function is as follows. Catalyzes the hydroxylation of 2-nonaprenyl-3-methyl-6-methoxy-1,4-benzoquinol during ubiquinone biosynthesis. The chain is 3-demethoxyubiquinol 3-hydroxylase from Nitrosomonas eutropha (strain DSM 101675 / C91 / Nm57).